We begin with the raw amino-acid sequence, 93 residues long: YcgL domain-containing protein Shal_1837 (93 aa).

The region spanning 1 to 85 is the YcgL domain; the sequence is MICAVYKSRR…PVVNLLEQHK (85 aa).

The polypeptide is YcgL domain-containing protein Shal_1837 (Shewanella halifaxensis (strain HAW-EB4)).